Reading from the N-terminus, the 365-residue chain is Galactoside alpha-(1,2)-fucosyltransferase 1 (365 aa).

Residues 1–8 (MWLRSHRQ) lie on the Cytoplasmic side of the membrane. A helical; Signal-anchor for type II membrane protein membrane pass occupies residues 9–25 (LCLAFLLVCVLSVIFFL). Topologically, residues 26-365 (HIHQDSFPHG…LSPLWTLAKP (340 aa)) are lumenal. Asn65 and Asn327 each carry an N-linked (GlcNAc...) asparagine glycan.

The protein belongs to the glycosyltransferase 11 family.

Its subcellular location is the golgi apparatus. The protein resides in the golgi stack membrane. The catalysed reaction is a beta-D-galactosyl-(1-&gt;4)-N-acetyl-beta-D-glucosaminyl derivative + GDP-beta-L-fucose = an alpha-L-Fuc-(1-&gt;2)-beta-D-Gal-(1-&gt;4)-beta-D-GlcNAc derivative + GDP + H(+). It catalyses the reaction a ganglioside GA1 + GDP-beta-L-fucose = a ganglioside Fuc-GA1 + GDP + H(+). The enzyme catalyses a beta-D-Gal-(1-&gt;3)-beta-D-GlcNAc-(1-&gt;3)-beta-D-Gal-(1-&gt;4)-beta-D-Glc-(1&lt;-&gt;1')-Cer(d18:1(4E)) + GDP-beta-L-fucose = alpha-L-fucosyl-(1-&gt;2)- beta-D-galactosyl-(1-&gt;3)-N-acetyl-beta-D-glucosaminyl-(1-&gt;3)-beta-D-galactosyl-(1-&gt;4)-beta-D-glucosyl-(1&lt;-&gt;1')-N-acylsphing-4-enine + GDP + H(+). It carries out the reaction a neolactoside nLc4Cer(d18:1(4E)) + GDP-beta-L-fucose = a neolactoside IV(2)-alpha-Fuc-nLc4Cer(d18:1(4E)) + GDP + H(+). The catalysed reaction is a ganglioside GM1 + GDP-beta-L-fucose = a ganglioside Fuc-GM1 + GDP + H(+). It catalyses the reaction beta-D-galactosyl-(1-&gt;3)-N-acetyl-D-galactosamine + GDP-beta-L-fucose = alpha-L-fucosyl-(1-&gt;2)-beta-D-galactosyl-(1-&gt;3)-N-acetyl-D-galactosamine + GDP + H(+). Its pathway is protein modification; protein glycosylation. In terms of biological role, catalyzes the transfer of L-fucose, from a guanosine diphosphate-beta-L-fucose, to the terminal galactose residue of glycoconjugates through an alpha(1,2) linkage leading to H antigen synthesis that is an intermediate substrate in the synthesis of ABO blood group antigens. H antigen is essential for maturation of the glomerular layer of the main olfactory bulb, in cell migration and early cell-cell contacts during tumor associated angiogenesis. Preferentially fucosylates soluble lactose and to a lesser extent fucosylates glycolipids gangliosides GA1 and GM1a. The polypeptide is Galactoside alpha-(1,2)-fucosyltransferase 1 (Homo sapiens (Human)).